A 114-amino-acid polypeptide reads, in one-letter code: UPF0145 protein YG5714_0873 (114 aa).

It belongs to the UPF0145 family.

The chain is UPF0145 protein YG5714_0873 from Saccharolobus islandicus (strain Y.G.57.14 / Yellowstone #1) (Sulfolobus islandicus).